Consider the following 2335-residue polypeptide: MSDGGVACMPLLNIMEKLPIVEKTTLCGGNESKTAATTENGHTSIATKVPESQPANKPSASSQPVKKKRIVKVIRKVVKRRPKQPQKQADEQLKDQPPSQVVQLPAESQLQIKEQDKKSEFKGGTSGVKEVENGGDSGFKDEVEEGELGTLKLHEDLENGEISPVKSLQKSEIEKGEIVGESWKKDEPTKGEFSHLKYHKGYVERRDFSADKNWKGGKEEREFRSWRDPSDEIEKGEFIPDRWQKMDTGKDDHSYIRSRRNGVDREKTWKYEYEYERTPPGGRFVNEDIYHQREFRSGLDRTTRISSKIVIEENLHKNEYNNSSNFVKEYSSTGNRLKRHGAEPDSIERKHSYADYGDYGSSKCRKLSDDCSRSLHSDHYSQHSAERLYRDSYPSKNSSLEKYPRKHQDASFPAKAFSDKHGHSPSRSDWSPHDRSRYHENRDRSPYARERSPYIFEKSSHARKRSPRDRRHHDYRRSPSYSEWSPHDRSRPSDRRDYIPNFMEDTQSDRNRRNGHREISRKSGVRERRDCQTGTELEIKHKYKESNGKESTSSSKELQGKNILYNNSLLVEKNSVCDSSKIPVPCATGKEPVQVGEAPTEELPSMEVDMDICDTPPHEPMASDSSLGKWFYLDYYGTEHGPARLSDLKALMEQGILFSDHMIKHSDNNRWLVNPPEAPGNLLEDIADTTEAVCIEQGAGDSLPELVSVRTLPDGKEIFVENREDFQIDMRVENLLDGRTITPGREFETLGEALKVNVEFEETRRCVTSEGVVGMFRPMKRAIEEFKSDDAYGSESDEIGSWFSGRWSCKGGDWIRQDEASQDRYYKKKIVLNDGFPLCLMQKSGHEDPRWHHKDDLYYPLSSSRLELPLWAFSVVDERNQTRGVKASLLSVVRLNSLVVNDQVPPIPDPRAKVRSKERCPSRPARPSPASSDSKRESVESHSQSTASTGQDSQGLWKTDTSVNTPRDRLCTVDDLQLHIGDWFYTDGAGQEQGPLSFSELQKLVEKGFIKSHSSVFRKSDKIWVPVTSITKSPETIAMLRGKTPALPSACQGLVVSETQDFKYSEMDTSLNSFHGVHPQFLGYFRGKLHQLVMKTFKSRDFSAAINDVVDSWIHARQPKKESEKYMYQSSELNSCYTKRARLMAGESGEDSEMEDTQMFQKDELTFEDLCGDLTFNIEGNRSAGTVGIYWGLLDGHALARVFHMLRYDVKSLAFASMTCRHWKATINSYKDISRQVDLSSLGPSCTDSRLRSIMNTYNKEKIDSIILVGCTNVTASMLEEILRLHPRISSVDITGCSQFGDLTVNYKNVSWLRCQNTRSGELHSRIRSLKQTTDVAKSKGLGGDTDDFGNLKDYFDRVEKRDSANQLFRRSLYKRSKLYDARRSSAILSRDARIRRWAIKKSEHGYKRVEEFLASSLRGIMKQNTFDFFALKVSQIEEKMKNGYYVSHGLRSVKEDISRMCREAIKDELMKSWQDGSGLSSATKYNKKLSKTVAEKKYMSRTSDTFGVNGASDYGEYASDREIKRRLSKLNRKSFSSESDTSSELSDNGKSDNYSSASASESESDIRSEGRSQDLRIEKYFTADDSFDSVTEEREWGARMTKASLVPPVTRKYEVIEKYAIVADEEEVQRKMRVSLPEDYGEKLNAQRNGIEELDMELPEVKEYKPRKLLGDEVLEQEVYGIDPYTHNLLLDSMPGELDWSLQDKHSFIEDVVLRTLNRQVRLFTGSGSTPMVFPLRPVIEELKESAREECDIRTMKMCQGVLKEIESRSDDKYVSYRKGLGVVCNKEGGFGEEDFVVEFLGEVYPVWKWFEKQDGIRSLQENKTDPAPEFYNIYLERPKGDADGYDLVVVDAMHMANYASRICHSCRPNCEAKVTAVDGHYQIGIYSVRAIEYGEEITFDYNSVTESKEEYEASVCLCGSQVCRGSYLNLTGEGAFQKVLKDWHGLLERHRLMLEACVLNSVSEEDYLELGRAGLGSCLLGGLPDWMIAYSARLVRFINFERTKLPEEILKHNLEEKRKYFSDIHLDVEKSDAEVQAEGVYNQRLQNLAVTLDKVRYVMRHVFGDPKNAPPPLERLTPEETVSFVWNGDGSLVDELLQSLSPHLEEGPLNELRSKIHGHDPSGSADVLKELQRSLLWLRDEIRDLPCTYKCRNDAAADLIHIYAYTKCFFKVREYQSFISSPVHISPLDLGAKYADKLGESIKEYRKTYGENYCLGQLIYWYNQTNTDPDLTLVKATRGCLSLPDVASFYAKAQKPSKHRVYGPKTVKTMVSQMSKQPQRPWPKDKIWTFKSTPRVFGSPMFDAVLNNSSSLDRELLQWLRNRRHVFQATWDS.

Disordered stretches follow at residues 30–142, 332–355, 371–556, and 902–961; these read NESK…FKDE, STGN…SYAD, CSRS…SSSK, and DQVP…KTDT. Polar residues-rich tracts occupy residues 31 to 46 and 53 to 62; these read ESKT…TSIA and QPANKPSASS. Residues 65 to 84 are compositionally biased toward basic residues; that stretch reads VKKKRIVKVIRKVVKRRPKQ. A Nuclear localization signal 1 motif is present at residues 67-74; it reads KKRIVKVI. A compositionally biased stretch (polar residues) spans 97 to 112; it reads PPSQVVQLPAESQLQI. Basic and acidic residues-rich tracts occupy residues 340–353, 371–390, and 430–452; these read HGAE…KHSY, CSRS…RLYR, and WSPH…RERS. Basic residues predominate over residues 461–475; it reads HARKRSPRDRRHHDY. Basic and acidic residues-rich tracts occupy residues 485–498, 507–548, and 910–921; these read SPHD…RRDY, QSDR…ESNG, and PRAKVRSKERCP. The short motif at 527-534 is the Nuclear localization signal 2 element; that stretch reads ERRDCQTG. Residues 922 to 932 show a composition bias toward low complexity; that stretch reads SRPARPSPASS. The span at 941–961 shows a compositional bias: polar residues; sequence SHSQSTASTGQDSQGLWKTDT. The Nuclear localization signal 3 motif lies at 1382–1389; it reads ARRSSAIL. Positions 1532 to 1572 are disordered; it reads NRKSFSSESDTSSELSDNGKSDNYSSASASESESDIRSEGR. A compositionally biased stretch (low complexity) spans 1535–1547; it reads SFSSESDTSSELS. The 140-residue stretch at 1765–1904 folds into the SET domain; sequence KEIESRSDDK…YGEEITFDYN (140 aa). Cys-1868 lines the Zn(2+) pocket. Tyr-1903 provides a ligand contact to S-adenosyl-L-methionine. The region spanning 1914 to 1930 is the Post-SET domain; the sequence is EASVCLCGSQVCRGSYL. Residues Cys-1918, Cys-1920, and Cys-1925 each contribute to the Zn(2+) site.

The protein belongs to the class V-like SAM-binding methyltransferase superfamily. Histone-lysine methyltransferase family. TRX/MLL subfamily. Expressed in roots, leaves, stems and inflorescences.

Its subcellular location is the nucleus. It catalyses the reaction L-lysyl(4)-[histone H3] + 3 S-adenosyl-L-methionine = N(6),N(6),N(6)-trimethyl-L-lysyl(4)-[histone H3] + 3 S-adenosyl-L-homocysteine + 3 H(+). Its function is as follows. Histone methyltransferase specifically required for trimethylation of 'Lys-4' of histone H3 (H3K4me3) and is crucial for both sporophyte and gametophyte development. Function as a diurnal 'writer' to counteract the nocturne 'eraser' demethylase activity of JMJ14 thus orchestrating the circadian rhythm of histone modifications (e.g. H3K4me3) and modulating the rhythmic expression of diurnal target genes; this mechanism relies also on the circadian clock oscillators CCA1 and LHY. This Arabidopsis thaliana (Mouse-ear cress) protein is Histone-lysine N-methyltransferase ATXR3.